A 438-amino-acid polypeptide reads, in one-letter code: Thymidine phosphorylase (438 aa).

The protein belongs to the thymidine/pyrimidine-nucleoside phosphorylase family. Homodimer.

The catalysed reaction is thymidine + phosphate = 2-deoxy-alpha-D-ribose 1-phosphate + thymine. It functions in the pathway pyrimidine metabolism; dTMP biosynthesis via salvage pathway; dTMP from thymine: step 1/2. Functionally, the enzymes which catalyze the reversible phosphorolysis of pyrimidine nucleosides are involved in the degradation of these compounds and in their utilization as carbon and energy sources, or in the rescue of pyrimidine bases for nucleotide synthesis. This chain is Thymidine phosphorylase, found in Burkholderia orbicola (strain MC0-3).